The chain runs to 476 residues: UDP-N-acetylmuramate--L-alanine ligase (476 aa).

125–131 contributes to the ATP binding site; it reads GTHGKTT.

Belongs to the MurCDEF family.

Its subcellular location is the cytoplasm. It catalyses the reaction UDP-N-acetyl-alpha-D-muramate + L-alanine + ATP = UDP-N-acetyl-alpha-D-muramoyl-L-alanine + ADP + phosphate + H(+). It participates in cell wall biogenesis; peptidoglycan biosynthesis. In terms of biological role, cell wall formation. The polypeptide is UDP-N-acetylmuramate--L-alanine ligase (Histophilus somni (strain 129Pt) (Haemophilus somnus)).